The following is a 326-amino-acid chain: tRNA uridine(34) hydroxylase (326 aa).

One can recognise a Rhodanese domain in the interval 123 to 217 (SDPDVLLVDT…YLEEVPEENS (95 aa)). Cys177 serves as the catalytic Cysteine persulfide intermediate. Positions 276–320 (EEQKSRFREREKQVQLANERGETHVGGDAAKLIEQRKQEKKEKKQ) are enriched in basic and acidic residues. The disordered stretch occupies residues 276-326 (EEQKSRFREREKQVQLANERGETHVGGDAAKLIEQRKQEKKEKKQQQRSSK).

This sequence belongs to the TrhO family.

The enzyme catalyses uridine(34) in tRNA + AH2 + O2 = 5-hydroxyuridine(34) in tRNA + A + H2O. Its function is as follows. Catalyzes oxygen-dependent 5-hydroxyuridine (ho5U) modification at position 34 in tRNAs. This Aliivibrio salmonicida (strain LFI1238) (Vibrio salmonicida (strain LFI1238)) protein is tRNA uridine(34) hydroxylase.